The primary structure comprises 272 residues: uncharacterized protein (272 aa).

Residues aspartate 71 and glutamate 163 contribute to the active site.

It belongs to the glycosyl hydrolase 25 family.

This is an uncharacterized protein from Escherichia coli (strain K12).